The following is a 418-amino-acid chain: Elongation factor 1-gamma 1 (418 aa).

The region spanning 1–82 (MALVLHTFDG…YVTRSKSDNP (82 aa)) is the GST N-terminal domain. Residues 87-213 (SLIEYAHIEQ…GDVKQADSVP (127 aa)) form the GST C-terminal domain. A disordered region spans residues 211-265 (SVPQVQKKAAAPKEQKPKEAKKEAPKEAPKPKAAEKPEEEEEAPKPKPKNPLDLL). The segment covering 221 to 246 (APKEQKPKEAKKEAPKEAPKPKAAEK) has biased composition (basic and acidic residues). The EF-1-gamma C-terminal domain maps to 258–418 (PKNPLDLLPP…EALLDAKCFK (161 aa)).

In terms of assembly, EF-1 is composed of four subunits: alpha, beta, delta, and gamma.

Its function is as follows. Probably plays a role in anchoring the complex to other cellular components. This is Elongation factor 1-gamma 1 from Oryza sativa subsp. japonica (Rice).